The chain runs to 1451 residues: Murinoglobulin-2 (1451 aa).

The first 27 residues, 1-27, serve as a signal peptide directing secretion; it reads MWKSRRAQLCLFSVLLAFLPSASSLNG. Disulfide bonds link Cys48–Cys86, Cys251–Cys276, and Cys269–Cys288. N-linked (GlcNAc...) asparagine glycosylation is present at Asn55. N-linked (GlcNAc...) asparagine glycans are attached at residues Asn294, Asn313, and Asn500. 3 disulfides stabilise this stretch: Cys461/Cys555, Cys587/Cys773, and Cys634/Cys680. Residues 677–734 are bait region; sequence PKICFDSAPMSGPRGKFDLAFSSEVSGTLQKGSSKRPQPEEPPREDPPPKDPLAETIR. The segment at 703 to 728 is disordered; the sequence is GTLQKGSSKRPQPEEPPREDPPPKDP. The span at 713 to 728 shows a compositional bias: basic and acidic residues; that stretch reads PQPEEPPREDPPPKDP. Residues Asn749, Asn776, and Asn871 are each glycosylated (N-linked (GlcNAc...) asparagine). 4 disulfide bridges follow: Cys849/Cys885, Cys923/Cys1274, Cys1081/Cys1104, and Cys1298/Cys1444. The segment at residues 974 to 977 is a cross-link (isoglutamyl cysteine thioester (Cys-Gln)); the sequence is CGEQ. N-linked (GlcNAc...) asparagine glycosylation is present at Asn1401.

The protein belongs to the protease inhibitor I39 (alpha-2-macroglobulin) family. As to quaternary structure, monomer. As to expression, plasma.

The protein localises to the secreted. Its function is as follows. A proteinase activates the inhibitor by specific proteolysis in the bait region, which, by an unknown mechanism leads to reaction at the cysteinyl-glutamyl internal thiol ester site and to a conformational change, whereby the proteinase is trapped and/or covalently bound to the inhibitor. While in the tetrameric proteinase inhibitors steric inhibition is sufficiently strong, monomeric forms need a covalent linkage between the activated glutamyl residue of the original thiol ester and a terminal amino group of a lysine or another nucleophilic group on the proteinase, for inhibition to be effective. This is Murinoglobulin-2 (Mug2) from Mus musculus (Mouse).